The chain runs to 109 residues: Cell division protein ZapA (109 aa).

The stretch at 22 to 99 forms a coiled coil; that stretch reads EQQDALNMAA…IEQALLEQGR (78 aa).

This sequence belongs to the ZapA family. Type 1 subfamily. As to quaternary structure, homodimer. Interacts with FtsZ.

The protein resides in the cytoplasm. Activator of cell division through the inhibition of FtsZ GTPase activity, therefore promoting FtsZ assembly into bundles of protofilaments necessary for the formation of the division Z ring. It is recruited early at mid-cell but it is not essential for cell division. The polypeptide is Cell division protein ZapA (Yersinia pseudotuberculosis serotype O:1b (strain IP 31758)).